The primary structure comprises 171 residues: UPF0763 protein KHP_0657 (171 aa).

Belongs to the UPF0763 family.

In Helicobacter pylori (strain 51), this protein is UPF0763 protein KHP_0657.